We begin with the raw amino-acid sequence, 371 residues long: Leu/Ile/Val-binding protein homolog 1 (371 aa).

Positions 1-23 are cleaved as a signal peptide; the sequence is MRKTLFSGVALAAVIAFGGSAWA.

The protein belongs to the leucine-binding protein family.

In terms of biological role, component of an amino-acid transport system. The chain is Leu/Ile/Val-binding protein homolog 1 from Brucella melitensis biotype 1 (strain ATCC 23456 / CCUG 17765 / NCTC 10094 / 16M).